Consider the following 404-residue polypeptide: Argininosuccinate synthase (404 aa).

Residues 12 to 20 (AYSGGLDTS) and alanine 40 contribute to the ATP site. L-citrulline-binding residues include tyrosine 92 and serine 97. Glycine 122 is a binding site for ATP. L-aspartate contacts are provided by threonine 124, asparagine 128, and aspartate 129. Position 128 (asparagine 128) interacts with L-citrulline. L-citrulline is bound by residues arginine 132, serine 181, serine 190, glutamate 266, and tyrosine 278.

Belongs to the argininosuccinate synthase family. Type 1 subfamily. Homotetramer.

It is found in the cytoplasm. The catalysed reaction is L-citrulline + L-aspartate + ATP = 2-(N(omega)-L-arginino)succinate + AMP + diphosphate + H(+). Its pathway is amino-acid biosynthesis; L-arginine biosynthesis; L-arginine from L-ornithine and carbamoyl phosphate: step 2/3. This is Argininosuccinate synthase from Erwinia tasmaniensis (strain DSM 17950 / CFBP 7177 / CIP 109463 / NCPPB 4357 / Et1/99).